Consider the following 40-residue polypeptide: Light-harvesting protein B800/830/1020 beta-1 chain (40 aa).

Topologically, residues 1-20 (ANDIRPLRDFEDEEAQEFHQ) are cytoplasmic. Residues His-19 and His-37 each contribute to the a bacteriochlorophyll site. A helical transmembrane segment spans residues 21–40 (AAVQAFFLYVAVAFVAHLPV).

This sequence belongs to the antenna complex beta subunit family. In terms of assembly, the core complex is formed by different alpha and beta chains, binding bacteriochlorophyll molecules, and arranged most probably in tetrameric structures disposed around the reaction center. The non-pigmented gamma chains may constitute additional components.

It is found in the cell inner membrane. Its function is as follows. Antenna complexes are light-harvesting systems, which transfer the excitation energy to the reaction centers. The polypeptide is Light-harvesting protein B800/830/1020 beta-1 chain (Halorhodospira halochloris (Ectothiorhodospira halochloris)).